Here is a 487-residue protein sequence, read N- to C-terminus: Malonate-semialdehyde dehydrogenase 3 (487 aa).

Residues Phe154, Lys178, Glu181, Arg182, and Ser231 each coordinate NAD(+). Cys286 serves as the catalytic Nucleophile. Glu386 provides a ligand contact to NAD(+).

The protein belongs to the aldehyde dehydrogenase family. IolA subfamily. Homotetramer.

It carries out the reaction 3-oxopropanoate + NAD(+) + CoA + H2O = hydrogencarbonate + acetyl-CoA + NADH + H(+). It catalyses the reaction 2-methyl-3-oxopropanoate + NAD(+) + CoA + H2O = propanoyl-CoA + hydrogencarbonate + NADH + H(+). It functions in the pathway polyol metabolism; myo-inositol degradation into acetyl-CoA; acetyl-CoA from myo-inositol: step 7/7. Its function is as follows. Catalyzes the oxidation of malonate semialdehyde (MSA) and methylmalonate semialdehyde (MMSA) into acetyl-CoA and propanoyl-CoA, respectively. Is involved in a myo-inositol catabolic pathway. Bicarbonate, and not CO2, is the end-product of the enzymatic reaction. This chain is Malonate-semialdehyde dehydrogenase 3, found in Bacillus cereus (strain ZK / E33L).